Here is a 60-residue protein sequence, read N- to C-terminus: MTCCNQQSSQPKTTTNCAESSCYKKTWSDHRGTRIERGCGCPQVKSGIKLECCHTNECNN.

Cystine bridges form between Cys-3–Cys-22, Cys-17–Cys-39, Cys-41–Cys-52, and Cys-53–Cys-58.

This sequence belongs to the three-finger toxin family. Short-chain subfamily. Type I alpha-neurotoxin sub-subfamily. In terms of tissue distribution, expressed by the venom gland.

The protein resides in the secreted. In terms of biological role, binds to muscle nicotinic acetylcholine receptor (nAChR) and inhibit acetylcholine from binding to the receptor, thereby impairing neuromuscular transmission. This is Toxin 5 from Hydrophis schistosus (Beaked sea snake).